The chain runs to 725 residues: Protein ECM27 (725 aa).

The next 12 helical transmembrane spans lie at 21 to 41, 119 to 139, 157 to 177, 178 to 198, 397 to 417, 439 to 459, 470 to 490, 526 to 546, 559 to 579, 621 to 641, 668 to 688, and 704 to 724; these read VTFIVPSLFHIIIAFVLLGIC, VLGACGIILCIVEGSIFIIMS, LLFSLAAMCVMSYVSLMNQVT, VLNCLLMAFLYAFYLVVKLTF, ISDAIFSIITVPFFIIFKLSC, LPIILLFIQSITAPFLLCSIL, LVYLFPLILAMALILLLTAFI, IQIIFLAIGIINIIIWISLLA, ILGLSKAILGLTIFAWGNSVG, LNSMGGIGFSGLVSMLFIGAF, FIVSCVFIILQIILLLLFFGG, and GISMCGLWALATLINILLELF.

It belongs to the Ca(2+):cation antiporter (CaCA) (TC 2.A.19) family.

Its subcellular location is the membrane. This Saccharomyces cerevisiae (strain ATCC 204508 / S288c) (Baker's yeast) protein is Protein ECM27 (ECM27).